The sequence spans 201 residues: DeSI-like protein sdu1 (201 aa).

The PPPDE domain maps to 1–143; sequence MKVYINVYDL…AFPTITNALL (143 aa). Active-site residues include His29 and Cys105. Positions 146–201 are disordered; it reads GQKNTSDVDDSSDSSSDVDEETLIVSKSKKAHKDIPKFSAPPPSADLNNLITDSLP. Residues 152 to 167 are compositionally biased toward acidic residues; sequence DVDDSSDSSSDVDEET. Polar residues predominate over residues 191–201; it reads DLNNLITDSLP.

It belongs to the DeSI family.

It localises to the cytoplasm. In terms of biological role, has a role in meiosis. The chain is DeSI-like protein sdu1 (sdu1) from Schizosaccharomyces pombe (strain 972 / ATCC 24843) (Fission yeast).